The chain runs to 2338 residues: Proto-oncogene tyrosine-protein kinase ROS (2338 aa).

Positions 1-27 (MKRIRWLTPKPATFVVLGCVWISVAQG) are cleaved as a signal peptide. Over 28–1853 (TILSSCLTSC…EDGFWITETS (1826 aa)) the chain is Extracellular. N-linked (GlcNAc...) asparagine glycosylation is found at Asn52 and Asn77. 2 Fibronectin type-III domains span residues 110-205 (LPTA…VPET) and 206-294 (APFI…PSPA). N-linked (GlcNAc...) asparagine glycans are attached at residues Asn333, Asn361, Asn480, Asn623, Asn934, and Asn1010. Residues 566-666 (LPGHPQEVSV…EPSVGTTLVP (101 aa)) form the Fibronectin type-III 3 domain. Fibronectin type-III domains follow at residues 942 to 1037 (IPDS…SVPS) and 1038 to 1145 (APEN…TSEI). The N-linked (GlcNAc...) asparagine glycan is linked to Asn1298. 4 Fibronectin type-III domains span residues 1440 to 1548 (VASN…TKSG), 1549 to 1648 (VPGA…VNMF), 1650 to 1743 (TPEK…TKAG), and 1744 to 1845 (VPSK…LVED). Residue Asn1675 is glycosylated (N-linked (GlcNAc...) asparagine). Residues 1854-1874 (FILTIIVGIFLVATVPLTFVW) traverse the membrane as a helical segment. Residues 1875 to 2338 (HRSLKNHKAT…AHSGHGDVSE (464 aa)) are Cytoplasmic-facing. The 274-residue stretch at 1937-2210 (LSLRLLLGSG…YNIQDQLQLF (274 aa)) folds into the Protein kinase domain. Residues 1943–1951 (LGSGAFGEV) and Lys1972 each bind ATP. Asp2071 (proton acceptor) is an active-site residue. Phosphotyrosine; by autocatalysis is present on Tyr2266. The interval 2277-2314 (EDRYEGPLGSKESGLHDLKKDERQPADKDFCQQPQVAY) is disordered. A compositionally biased stretch (basic and acidic residues) spans 2289-2306 (SGLHDLKKDERQPADKDF). Position 2325 is a phosphotyrosine; by autocatalysis (Tyr2325).

Belongs to the protein kinase superfamily. Tyr protein kinase family. Insulin receptor subfamily. As to quaternary structure, interacts with PTPN11; may activate the PI3 kinase-mTOR signaling pathway. Interacts with VAV3; constitutive interaction mediating VAV3 phosphorylation. Interacts with PTPN6 (via SH2 1 domain); the interaction is direct and promotes ROS1 dephosphorylation. Post-translationally, phosphorylated. Probably autophosphorylates. Phosphorylation at Tyr-2266 is required for the interaction with PTPN6 that mediates ROS1 dephosphorylation. Phosphorylation at Tyr-2266 stimulates the kinase activity and the activation of the ERK1 signaling cascade. Phosphorylation at Tyr-2266 and/or Tyr-2325 recruits PTPN11. In terms of tissue distribution, expressed in heart, lung, kidney and testis.

It is found in the cell membrane. The enzyme catalyses L-tyrosyl-[protein] + ATP = O-phospho-L-tyrosyl-[protein] + ADP + H(+). Its activity is regulated as follows. Inhibited by dephosphorylation by PTPN6. In terms of biological role, orphan receptor tyrosine kinase (RTK) that plays a role in epithelial cell differentiation and regionalization of the proximal epididymal epithelium. NELL2 is an endogenous ligand for ROS1. Upon endogenous stimulation by NELL2, ROS1 activates the intracellular signaling pathway and triggers epididymal epithelial differentiation and subsequent sperm maturation. May activate several downstream signaling pathways related to cell differentiation, proliferation, growth and survival including the PI3 kinase-mTOR signaling pathway. Mediates the phosphorylation of PTPN11, an activator of this pathway. May also phosphorylate and activate the transcription factor STAT3 to control anchorage-independent cell growth. Mediates the phosphorylation and the activation of VAV3, a guanine nucleotide exchange factor regulating cell morphology. May activate other downstream signaling proteins including AKT1, MAPK1, MAPK3, IRS1 and PLCG2. This is Proto-oncogene tyrosine-protein kinase ROS (Ros1) from Rattus norvegicus (Rat).